We begin with the raw amino-acid sequence, 264 residues long: Indole-3-glycerol phosphate synthase (264 aa).

This sequence belongs to the TrpC family.

The enzyme catalyses 1-(2-carboxyphenylamino)-1-deoxy-D-ribulose 5-phosphate + H(+) = (1S,2R)-1-C-(indol-3-yl)glycerol 3-phosphate + CO2 + H2O. Its pathway is amino-acid biosynthesis; L-tryptophan biosynthesis; L-tryptophan from chorismate: step 4/5. In Carboxydothermus hydrogenoformans (strain ATCC BAA-161 / DSM 6008 / Z-2901), this protein is Indole-3-glycerol phosphate synthase.